A 148-amino-acid polypeptide reads, in one-letter code: D-aminoacyl-tRNA deacylase (148 aa).

The Gly-cisPro motif, important for rejection of L-amino acids motif lies at 136–137; the sequence is GP.

Belongs to the DTD family. In terms of assembly, homodimer.

It is found in the cytoplasm. It carries out the reaction glycyl-tRNA(Ala) + H2O = tRNA(Ala) + glycine + H(+). It catalyses the reaction a D-aminoacyl-tRNA + H2O = a tRNA + a D-alpha-amino acid + H(+). An aminoacyl-tRNA editing enzyme that deacylates mischarged D-aminoacyl-tRNAs. Also deacylates mischarged glycyl-tRNA(Ala), protecting cells against glycine mischarging by AlaRS. Acts via tRNA-based rather than protein-based catalysis; rejects L-amino acids rather than detecting D-amino acids in the active site. By recycling D-aminoacyl-tRNA to D-amino acids and free tRNA molecules, this enzyme counteracts the toxicity associated with the formation of D-aminoacyl-tRNA entities in vivo and helps enforce protein L-homochirality. The sequence is that of D-aminoacyl-tRNA deacylase from Streptococcus mutans serotype c (strain ATCC 700610 / UA159).